We begin with the raw amino-acid sequence, 142 residues long: MADKFDANDETRTVYAVVYDNDQPVSTGQFLAETKIEARLTRIVTLADYCGCGYGAKVTEALETYTRREGFYQLTIHSELTAQTFYENLGYQSYGPKCLEDGEYCQSLAKTILKWEKNMDIAMLIAIVGGLLGCYLYLTKNN.

Residues 1 to 120 (MADKFDANDE…TILKWEKNMD (120 aa)) form the N-acetyltransferase domain.

Belongs to the acetyltransferase family.

This is an uncharacterized protein from Streptococcus pyogenes serotype M1.